Here is a 467-residue protein sequence, read N- to C-terminus: 3-isopropylmalate dehydratase large subunit (467 aa).

Cys347, Cys408, and Cys411 together coordinate [4Fe-4S] cluster.

It belongs to the aconitase/IPM isomerase family. LeuC type 1 subfamily. In terms of assembly, heterodimer of LeuC and LeuD. [4Fe-4S] cluster serves as cofactor.

It carries out the reaction (2R,3S)-3-isopropylmalate = (2S)-2-isopropylmalate. Its pathway is amino-acid biosynthesis; L-leucine biosynthesis; L-leucine from 3-methyl-2-oxobutanoate: step 2/4. Functionally, catalyzes the isomerization between 2-isopropylmalate and 3-isopropylmalate, via the formation of 2-isopropylmaleate. This Bordetella pertussis (strain Tohama I / ATCC BAA-589 / NCTC 13251) protein is 3-isopropylmalate dehydratase large subunit.